We begin with the raw amino-acid sequence, 281 residues long: Pantothenate synthetase (281 aa).

An ATP-binding site is contributed by 30-37 (MGYLHEGH). The active-site Proton donor is H37. Q61 contributes to the (R)-pantoate binding site. Q61 provides a ligand contact to beta-alanine. An ATP-binding site is contributed by 147–150 (GEKD). Residue Q153 participates in (R)-pantoate binding. ATP is bound by residues I176 and 184 to 187 (KSSR).

This sequence belongs to the pantothenate synthetase family. Homodimer.

It is found in the cytoplasm. The enzyme catalyses (R)-pantoate + beta-alanine + ATP = (R)-pantothenate + AMP + diphosphate + H(+). Its pathway is cofactor biosynthesis; (R)-pantothenate biosynthesis; (R)-pantothenate from (R)-pantoate and beta-alanine: step 1/1. In terms of biological role, catalyzes the condensation of pantoate with beta-alanine in an ATP-dependent reaction via a pantoyl-adenylate intermediate. The protein is Pantothenate synthetase of Clostridium botulinum (strain Kyoto / Type A2).